The sequence spans 274 residues: Formamidopyrimidine-DNA glycosylase (274 aa).

Pro2 serves as the catalytic Schiff-base intermediate with DNA. Glu3 serves as the catalytic Proton donor. The Proton donor; for beta-elimination activity role is filled by Lys58. 2 residues coordinate DNA: His92 and Arg111. The FPG-type; degenerate zinc finger occupies 239–273 (HVYGREGEPCERCGTIIEKIKVAQRGTHFCPLEQR). Arg263 serves as the catalytic Proton donor; for delta-elimination activity.

The protein belongs to the FPG family. As to quaternary structure, monomer. It depends on Zn(2+) as a cofactor.

The enzyme catalyses Hydrolysis of DNA containing ring-opened 7-methylguanine residues, releasing 2,6-diamino-4-hydroxy-5-(N-methyl)formamidopyrimidine.. It carries out the reaction 2'-deoxyribonucleotide-(2'-deoxyribose 5'-phosphate)-2'-deoxyribonucleotide-DNA = a 3'-end 2'-deoxyribonucleotide-(2,3-dehydro-2,3-deoxyribose 5'-phosphate)-DNA + a 5'-end 5'-phospho-2'-deoxyribonucleoside-DNA + H(+). Functionally, involved in base excision repair of DNA damaged by oxidation or by mutagenic agents. Acts as a DNA glycosylase that recognizes and removes damaged bases. Has a preference for oxidized purines, such as 7,8-dihydro-8-oxoguanine (8-oxoG). Has AP (apurinic/apyrimidinic) lyase activity and introduces nicks in the DNA strand. Cleaves the DNA backbone by beta-delta elimination to generate a single-strand break at the site of the removed base with both 3'- and 5'-phosphates. This chain is Formamidopyrimidine-DNA glycosylase, found in Lactiplantibacillus plantarum (strain ATCC BAA-793 / NCIMB 8826 / WCFS1) (Lactobacillus plantarum).